Consider the following 326-residue polypeptide: Probable cell division protein WhiA (326 aa).

Positions 275–308 (SLEELGQLAEPPMTKDAVAGRIRRLLAMADKRAR) form a DNA-binding region, H-T-H motif.

Belongs to the WhiA family.

Functionally, involved in cell division and chromosome segregation. This is Probable cell division protein WhiA from Saccharopolyspora erythraea (strain ATCC 11635 / DSM 40517 / JCM 4748 / NBRC 13426 / NCIMB 8594 / NRRL 2338).